We begin with the raw amino-acid sequence, 173 residues long: Regulator of ribonuclease activity A (173 aa).

The protein belongs to the RraA family. In terms of assembly, homotrimer. Binds to both RNA-binding sites in the C-terminal region of Rne and to RhlB.

The protein resides in the cytoplasm. Functionally, globally modulates RNA abundance by binding to RNase E (Rne) and regulating its endonucleolytic activity. Can modulate Rne action in a substrate-dependent manner by altering the composition of the degradosome. Modulates RNA-binding and helicase activities of the degradosome. This Vibrio vulnificus (strain YJ016) protein is Regulator of ribonuclease activity A.